The sequence spans 145 residues: 3-hydroxyacyl-[acyl-carrier-protein] dehydratase FabZ (145 aa).

His-47 is an active-site residue.

Belongs to the thioester dehydratase family. FabZ subfamily.

It localises to the cytoplasm. The enzyme catalyses a (3R)-hydroxyacyl-[ACP] = a (2E)-enoyl-[ACP] + H2O. Its function is as follows. Involved in unsaturated fatty acids biosynthesis. Catalyzes the dehydration of short chain beta-hydroxyacyl-ACPs and long chain saturated and unsaturated beta-hydroxyacyl-ACPs. In Vesicomyosocius okutanii subsp. Calyptogena okutanii (strain HA), this protein is 3-hydroxyacyl-[acyl-carrier-protein] dehydratase FabZ.